The primary structure comprises 274 residues: Dermonecrotic toxin SdSicTox-betaIIB1aii (274 aa).

Histidine 5 is an active-site residue. Mg(2+)-binding residues include glutamate 25 and aspartate 27. The active-site Nucleophile is histidine 41. Disulfide bonds link cysteine 45–cysteine 51 and cysteine 47–cysteine 190. Aspartate 85 contacts Mg(2+).

The protein belongs to the arthropod phospholipase D family. Class II subfamily. Mg(2+) serves as cofactor. As to expression, expressed by the venom gland.

It localises to the secreted. It catalyses the reaction an N-(acyl)-sphingosylphosphocholine = an N-(acyl)-sphingosyl-1,3-cyclic phosphate + choline. It carries out the reaction an N-(acyl)-sphingosylphosphoethanolamine = an N-(acyl)-sphingosyl-1,3-cyclic phosphate + ethanolamine. The enzyme catalyses a 1-acyl-sn-glycero-3-phosphocholine = a 1-acyl-sn-glycero-2,3-cyclic phosphate + choline. The catalysed reaction is a 1-acyl-sn-glycero-3-phosphoethanolamine = a 1-acyl-sn-glycero-2,3-cyclic phosphate + ethanolamine. Functionally, dermonecrotic toxins cleave the phosphodiester linkage between the phosphate and headgroup of certain phospholipids (sphingolipid and lysolipid substrates), forming an alcohol (often choline) and a cyclic phosphate. This toxin acts on sphingomyelin (SM). It may also act on ceramide phosphoethanolamine (CPE), lysophosphatidylcholine (LPC) and lysophosphatidylethanolamine (LPE), but not on lysophosphatidylserine (LPS), and lysophosphatidylglycerol (LPG). It acts by transphosphatidylation, releasing exclusively cyclic phosphate products as second products. Induces dermonecrosis, hemolysis, increased vascular permeability, edema, inflammatory response, and platelet aggregation. This is Dermonecrotic toxin SdSicTox-betaIIB1aii from Sicarius cf. damarensis (strain GJB-2008) (Six-eyed sand spider).